The primary structure comprises 466 residues: tRNA modification GTPase MnmE (466 aa).

Positions 25, 82, and 127 each coordinate (6S)-5-formyl-5,6,7,8-tetrahydrofolate. The region spanning 223 to 388 (GIKVVIAGQP…LRRQLLQIAG (166 aa)) is the TrmE-type G domain. K(+) is bound at residue asparagine 233. GTP-binding positions include 233–238 (NAGKSS), 252–258 (TPIAGTT), 277–280 (DTAG), 346–349 (NKAD), and 369–371 (SAR). Mg(2+) is bound at residue serine 237. Residues threonine 252, isoleucine 254, and threonine 257 each contribute to the K(+) site. Threonine 258 contributes to the Mg(2+) binding site. Residue lysine 466 participates in (6S)-5-formyl-5,6,7,8-tetrahydrofolate binding.

This sequence belongs to the TRAFAC class TrmE-Era-EngA-EngB-Septin-like GTPase superfamily. TrmE GTPase family. Homodimer. Heterotetramer of two MnmE and two MnmG subunits. Requires K(+) as cofactor.

The protein localises to the cytoplasm. Its function is as follows. Exhibits a very high intrinsic GTPase hydrolysis rate. Involved in the addition of a carboxymethylaminomethyl (cmnm) group at the wobble position (U34) of certain tRNAs, forming tRNA-cmnm(5)s(2)U34. The chain is tRNA modification GTPase MnmE from Acidovorax sp. (strain JS42).